Consider the following 122-residue polypeptide: Holo-[acyl-carrier-protein] synthase (122 aa).

Residues aspartate 8 and glutamate 55 each contribute to the Mg(2+) site.

It belongs to the P-Pant transferase superfamily. AcpS family. Mg(2+) serves as cofactor.

It localises to the cytoplasm. The catalysed reaction is apo-[ACP] + CoA = holo-[ACP] + adenosine 3',5'-bisphosphate + H(+). Functionally, transfers the 4'-phosphopantetheine moiety from coenzyme A to a Ser of acyl-carrier-protein. This chain is Holo-[acyl-carrier-protein] synthase, found in Fusobacterium nucleatum subsp. nucleatum (strain ATCC 25586 / DSM 15643 / BCRC 10681 / CIP 101130 / JCM 8532 / KCTC 2640 / LMG 13131 / VPI 4355).